The sequence spans 662 residues: Envelope glycoprotein (662 aa).

The first 34 residues, 1 to 34 (MESPTHPKPSKDKTLSWNLVFLVGILFTIDIGMA), serve as a signal peptide directing secretion. The Extracellular portion of the chain corresponds to 35-606 (NPSPHQVYNV…FNKSPWFTTL (572 aa)). N-linked (GlcNAc...) asparagine; by host glycans are attached at residues Asn-43 and Asn-58. 2 cysteine pairs are disulfide-bonded: Cys-115–Cys-132 and Cys-124–Cys-137. Residues 245-279 (AMGPNLVLPDQKPPSRQSQIESRVTPHHSQGNGGT) form a disordered region. Residues 258-274 (PSRQSQIESRVTPHHSQ) are compositionally biased toward polar residues. N-linked (GlcNAc...) asparagine; by host glycans are attached at residues Asn-286, Asn-322, and Asn-327. 3 disulfide bridges follow: Cys-332–Cys-335, Cys-332–Cys-559, and Cys-551–Cys-558. The CXXC motif lies at 332-335 (CWLC). Asn-351, Asn-354, Asn-394, Asn-410, and Asn-430 each carry an N-linked (GlcNAc...) asparagine; by host glycan. Residues 468 to 488 (ISLTVALMLGGLTVGGIAAGV) are fusion peptide. Coiled-coil stretches lie at residues 496-545 (IETA…ILFL) and 555-591 (KEEC…SQQG). The tract at residues 534 to 550 (LQNRRGLDILFLQEGGL) is immunosuppression. The CX6CC motif lies at 551 to 559 (CAALKEECC). Residues 607–627 (ISSIMGPLLILLLILLFGPCI) form a helical membrane-spanning segment. A lipid anchor (S-palmitoyl cysteine; by host) is attached at Cys-626. At 628 to 662 (LNRLVQFVKDRISVVQALILTQQYQQIKQYDPDRP) the chain is on the cytoplasmic side.

As to quaternary structure, the mature envelope protein (Env) consists of a trimer of SU-TM heterodimers attached by a labile interchain disulfide bond. In terms of processing, specific enzymatic cleavages in vivo yield mature proteins. Envelope glycoproteins are synthesized as an inactive precursor that is N-glycosylated and processed likely by host cell furin or by a furin-like protease in the Golgi to yield the mature SU and TM proteins. The cleavage site between SU and TM requires the minimal sequence [KR]-X-[KR]-R. The R-peptide is released from the C-terminus of the cytoplasmic tail of the TM protein upon particle formation as a result of proteolytic cleavage by the viral protease. Cleavage of this peptide is required for TM to become fusogenic. Post-translationally, the CXXC motif is highly conserved across a broad range of retroviral envelope proteins. It is thought to participate in the formation of a labile disulfide bond possibly with the CX6CC motif present in the transmembrane protein. Isomerization of the intersubunit disulfide bond to an SU intrachain disulfide bond is thought to occur upon receptor recognition in order to allow membrane fusion. The transmembrane protein is palmitoylated. In terms of processing, the R-peptide is palmitoylated.

It is found in the virion membrane. Its subcellular location is the host cell membrane. Functionally, the surface protein (SU) attaches the virus to the host cell by binding to its receptor. This interaction triggers the refolding of the transmembrane protein (TM) and is thought to activate its fusogenic potential by unmasking its fusion peptide. Fusion occurs at the host cell plasma membrane. Its function is as follows. The transmembrane protein (TM) acts as a class I viral fusion protein. Under the current model, the protein has at least 3 conformational states: pre-fusion native state, pre-hairpin intermediate state, and post-fusion hairpin state. During viral and target cell membrane fusion, the coiled coil regions (heptad repeats) assume a trimer-of-hairpins structure, positioning the fusion peptide in close proximity to the C-terminal region of the ectodomain. The formation of this structure appears to drive apposition and subsequent fusion of viral and target cell membranes. Membranes fusion leads to delivery of the nucleocapsid into the cytoplasm. The protein is Envelope glycoprotein (env) of Felidae (cat family).